Here is a 478-residue protein sequence, read N- to C-terminus: Nuclear distribution protein PAC1 (478 aa).

Residues 9–41 (QAEELHKAMIAYLLSANLPKSAAALREELADSV) form the LisH domain. A coiled-coil region spans residues 60 to 87 (TSVVRLQKKIMDLESRNNALQSELDSAT). WD repeat units lie at residues 113–154 (SHRE…RTIK), 156–196 (HTKA…KNIR), 200–247 (GHDH…CVKT), 250–289 (GHVDWVRDVAASPDGRFLFSAGNDQVARLWDVSSGETKST), 292–352 (GHEH…IKTL), 354–393 (GHDNWVRALAFHPGGKYLLSVSDDKTLRCWDLTQECKCVR), 398–439 (AHGH…AASA), and 440–477 (INGVVPTGKKEDPGGGPMMGIRCVIATGSVDLKVRVFA).

It belongs to the WD repeat LIS1/nudF family. Self-associates. Interacts with NDL1 and dynein.

Its subcellular location is the cytoplasm. The protein localises to the cytoskeleton. It is found in the spindle pole. In terms of biological role, positively regulates the activity of the minus-end directed microtubule motor protein dynein. May enhance dynein-mediated microtubule sliding by targeting dynein to the microtubule plus end. Required for nuclear migration during vegetative growth as well as development. Required for retrograde early endosome (EE) transport from the hyphal tip. Required for localization of dynein to the mitotic spindle poles. Recruits additional proteins to the dynein complex at SPBs. The polypeptide is Nuclear distribution protein PAC1 (Paracoccidioides brasiliensis (strain Pb18)).